Consider the following 160-residue polypeptide: Phosphopantetheine adenylyltransferase (160 aa).

Threonine 9 contacts substrate. ATP contacts are provided by residues 9–10 and histidine 17; that span reads TF. Substrate is bound by residues lysine 41, leucine 73, and arginine 87. Residues 88–90, glutamate 98, and 123–129 each bind ATP; these read GLR and YMFISAS.

Belongs to the bacterial CoaD family. As to quaternary structure, homohexamer. Mg(2+) is required as a cofactor.

The protein resides in the cytoplasm. It carries out the reaction (R)-4'-phosphopantetheine + ATP + H(+) = 3'-dephospho-CoA + diphosphate. It functions in the pathway cofactor biosynthesis; coenzyme A biosynthesis; CoA from (R)-pantothenate: step 4/5. Functionally, reversibly transfers an adenylyl group from ATP to 4'-phosphopantetheine, yielding dephospho-CoA (dPCoA) and pyrophosphate. The protein is Phosphopantetheine adenylyltransferase of Thiobacillus denitrificans (strain ATCC 25259 / T1).